A 523-amino-acid chain; its full sequence is Na(+)/H(+) antiporter NhaB (523 aa).

10 consecutive transmembrane segments (helical) span residues Phe28–Val48, Phe51–Ala71, Leu89–Val109, Met137–Ile157, Phe237–Val257, Ala302–Ile322, Thr347–Ile367, Leu390–Val410, Val445–Leu465, and Met476–Leu496.

This sequence belongs to the NhaB Na(+)/H(+) (TC 2.A.34) antiporter family.

It is found in the cell inner membrane. The catalysed reaction is 2 Na(+)(in) + 3 H(+)(out) = 2 Na(+)(out) + 3 H(+)(in). In terms of biological role, na(+)/H(+) antiporter that extrudes sodium in exchange for external protons. The protein is Na(+)/H(+) antiporter NhaB of Tolumonas auensis (strain DSM 9187 / NBRC 110442 / TA 4).